Consider the following 392-residue polypeptide: Probable glucan endo-1,6-beta-glucosidase B (392 aa).

Residues 1-18 form the signal peptide; that stretch reads MKVTRLAVLNTLATLTVA. Asparagine 31 is a glycosylation site (N-linked (GlcNAc...) asparagine). Glutamate 220 (proton donor) is an active-site residue. The active-site Nucleophile is glutamate 322.

The protein belongs to the glycosyl hydrolase 5 (cellulase A) family.

It is found in the secreted. The catalysed reaction is Random hydrolysis of (1-&gt;6)-linkages in (1-&gt;6)-beta-D-glucans.. In terms of biological role, beta-glucanases participate in the metabolism of beta-glucan, the main structural component of the cell wall. Acts on lutean, pustulan and 1,6-oligo-beta-D-glucosides. The polypeptide is Probable glucan endo-1,6-beta-glucosidase B (exgB) (Aspergillus flavus (strain ATCC 200026 / FGSC A1120 / IAM 13836 / NRRL 3357 / JCM 12722 / SRRC 167)).